We begin with the raw amino-acid sequence, 112 residues long: Large ribosomal subunit protein uL22 (112 aa).

It belongs to the universal ribosomal protein uL22 family. As to quaternary structure, part of the 50S ribosomal subunit.

This protein binds specifically to 23S rRNA; its binding is stimulated by other ribosomal proteins, e.g. L4, L17, and L20. It is important during the early stages of 50S assembly. It makes multiple contacts with different domains of the 23S rRNA in the assembled 50S subunit and ribosome. Functionally, the globular domain of the protein is located near the polypeptide exit tunnel on the outside of the subunit, while an extended beta-hairpin is found that lines the wall of the exit tunnel in the center of the 70S ribosome. The polypeptide is Large ribosomal subunit protein uL22 (Lawsonia intracellularis (strain PHE/MN1-00)).